Here is a 698-residue protein sequence, read N- to C-terminus: Protein arginine N-methyltransferase 7 (698 aa).

SAM-dependent MTase PRMT-type domains follow at residues Gln-14 to Trp-357 and Glu-366 to Glu-698.

This sequence belongs to the class I-like SAM-binding methyltransferase superfamily. Protein arginine N-methyltransferase family. PRMT7 subfamily.

In terms of biological role, essential arginine methyltransferase that can both catalyze the formation of omega-N monomethylarginine (MMA) and symmetrical dimethylarginine (sDMA). Specifically mediates the symmetrical dimethylation of arginine residues in the small nuclear ribonucleoproteins SmD1 and SmD3. This is Protein arginine N-methyltransferase 7 (Art7) from Drosophila mojavensis (Fruit fly).